The primary structure comprises 189 residues: ATP synthase subunit b (189 aa).

Residues 38 to 58 traverse the membrane as a helical segment; sequence PMFLATLIAFILVVLILWFLL.

The protein belongs to the ATPase B chain family. In terms of assembly, F-type ATPases have 2 components, F(1) - the catalytic core - and F(0) - the membrane proton channel. F(1) has five subunits: alpha(3), beta(3), gamma(1), delta(1), epsilon(1). F(0) has three main subunits: a(1), b(2) and c(10-14). The alpha and beta chains form an alternating ring which encloses part of the gamma chain. F(1) is attached to F(0) by a central stalk formed by the gamma and epsilon chains, while a peripheral stalk is formed by the delta and b chains.

It is found in the cell membrane. Its function is as follows. F(1)F(0) ATP synthase produces ATP from ADP in the presence of a proton or sodium gradient. F-type ATPases consist of two structural domains, F(1) containing the extramembraneous catalytic core and F(0) containing the membrane proton channel, linked together by a central stalk and a peripheral stalk. During catalysis, ATP synthesis in the catalytic domain of F(1) is coupled via a rotary mechanism of the central stalk subunits to proton translocation. Functionally, component of the F(0) channel, it forms part of the peripheral stalk, linking F(1) to F(0). The protein is ATP synthase subunit b of Mycoplasmopsis agalactiae (strain NCTC 10123 / CIP 59.7 / PG2) (Mycoplasma agalactiae).